Here is a 332-residue protein sequence, read N- to C-terminus: Transaldolase (332 aa).

Lysine 136 functions as the Schiff-base intermediate with substrate in the catalytic mechanism.

It belongs to the transaldolase family. Type 1 subfamily.

It is found in the cytoplasm. The catalysed reaction is D-sedoheptulose 7-phosphate + D-glyceraldehyde 3-phosphate = D-erythrose 4-phosphate + beta-D-fructose 6-phosphate. It functions in the pathway carbohydrate degradation; pentose phosphate pathway; D-glyceraldehyde 3-phosphate and beta-D-fructose 6-phosphate from D-ribose 5-phosphate and D-xylulose 5-phosphate (non-oxidative stage): step 2/3. Its function is as follows. Transaldolase is important for the balance of metabolites in the pentose-phosphate pathway. This Trichormus variabilis (strain ATCC 29413 / PCC 7937) (Anabaena variabilis) protein is Transaldolase.